Reading from the N-terminus, the 396-residue chain is Phosphoglycerate kinase (396 aa).

Residues 21 to 23, Arg36, 59 to 62, Arg118, and Arg151 each bind substrate; these read DFN and HFDR. ATP-binding positions include Lys201, Glu323, and 353–356; that span reads GGDT.

Belongs to the phosphoglycerate kinase family. As to quaternary structure, monomer.

The protein resides in the cytoplasm. The enzyme catalyses (2R)-3-phosphoglycerate + ATP = (2R)-3-phospho-glyceroyl phosphate + ADP. Its pathway is carbohydrate degradation; glycolysis; pyruvate from D-glyceraldehyde 3-phosphate: step 2/5. The polypeptide is Phosphoglycerate kinase (Caulobacter sp. (strain K31)).